The following is a 285-amino-acid chain: MTTQAYPMALVTQDSLDGYIRSVNSYPMLTADEERDLAERLHYKGEIEAAKGLILSHLRFVVHVARGYSGYGLPMADLVQEGNIGLMKAVKRFNPEVGVRLVSFAVHWIKAEIHEYVLRNWRIVKIATTKAQRKLFFNLRKSKKRLGWFNNGEVETVARELGVEPAEVREMESRLAAVDSTFDLPNEEDDSSSVSTAPVLYLEDKSSDVADNLEAQNWEAHTNNRLAMALASLDERSQHIVRSRWLDDDKATLQDLAEMYGVSAERIRQLEKNAMKKLKMAVGEI.

The segment at 53 to 122 (LILSHLRFVV…IHEYVLRNWR (70 aa)) is sigma-70 factor domain-2. Residues 77–80 (DLVQ) carry the Interaction with polymerase core subunit RpoC motif. Positions 229-280 (ALASLDERSQHIVRSRWLDDDKATLQDLAEMYGVSAERIRQLEKNAMKKLKM) are sigma-70 factor domain-4. The H-T-H motif DNA-binding region spans 253 to 272 (LQDLAEMYGVSAERIRQLEK).

This sequence belongs to the sigma-70 factor family. RpoH subfamily. Interacts with the RNA polymerase core enzyme.

The protein localises to the cytoplasm. Functionally, sigma factors are initiation factors that promote the attachment of RNA polymerase to specific initiation sites and are then released. This sigma factor is involved in regulation of expression of heat shock genes. In Vibrio vulnificus (strain CMCP6), this protein is RNA polymerase sigma factor RpoH.